We begin with the raw amino-acid sequence, 346 residues long: MKVMRTTVATVVAATLSMSAFSVFAEASLTGAGATFPAPVYAKWADTYQKETGNKVNYQGIGSSGGVKQIIANTVDFGASDAPLSDEKLAQEGLFQFPTVIGGVVLAVNIPGLKSGELVLDGKTLGDIYLGKIKKWDDEAIAKLNPGLKLPSQNIAVVRRADGSGTSFVFTSYLAKVNEEWKNNVGTGSTVKWPIGLGGKGNDGIAAFVQRLPGAIGYVEYAYAKQNNLAYTKLISADGKPVSPTEENFANAAKGADWSKTFAQDLTNQKGEDAWPITSTTFILIHKDQKKPEQGTEVLKFFDWAYKTGAKQANDLDYASLPDSVVEQVRAAWKTNIKDSSGKPLY.

The N-terminal stretch at 1-25 (MKVMRTTVATVVAATLSMSAFSVFA) is a signal peptide. Phosphate is bound by residues 34-36 (ATF), serine 63, aspartate 81, and 164-166 (SGT).

This sequence belongs to the PstS family. As to quaternary structure, the complex is composed of two ATP-binding proteins (PstB), two transmembrane proteins (PstC and PstA) and a solute-binding protein (PstS).

It localises to the periplasm. Functionally, part of the ABC transporter complex PstSACB involved in phosphate import. The protein is Phosphate-binding protein PstS (pstS) of Escherichia coli (strain K12).